The following is a 953-amino-acid chain: UPF0746 protein DDB_G0281301 (953 aa).

The segment covering 1–10 (MVNNKRKEIE) has biased composition (basic and acidic residues). A disordered region spans residues 1–23 (MVNNKRKEIENQENDNNDDNDGL). Acidic residues predominate over residues 11–21 (NQENDNNDDND). The SAP domain maps to 35 to 69 (YDSIRSKELQTIAKSLGLPIIGKKQEIYKRIEGYF).

This sequence belongs to the UPF0746 family.

The polypeptide is UPF0746 protein DDB_G0281301 (Dictyostelium discoideum (Social amoeba)).